A 475-amino-acid chain; its full sequence is Sulfate adenylyltransferase subunit 1 (475 aa).

One can recognise a tr-type G domain in the interval 25–241; sequence KSLLRFLTCG…LENIEIQRVV (217 aa). The interval 34–41 is G1; it reads GSVDDGKS. 34 to 41 contributes to the GTP binding site; sequence GSVDDGKS. Positions 92 to 96 are G2; sequence GITID. The interval 113–116 is G3; the sequence is DTPG. GTP-binding positions include 113–117 and 168–171; these read DTPGH and NKMD. A G4 region spans residues 168 to 171; it reads NKMD. The tract at residues 206-208 is G5; the sequence is SAL.

This sequence belongs to the TRAFAC class translation factor GTPase superfamily. Classic translation factor GTPase family. CysN/NodQ subfamily. Heterodimer composed of CysD, the smaller subunit, and CysN.

It carries out the reaction sulfate + ATP + H(+) = adenosine 5'-phosphosulfate + diphosphate. Its pathway is sulfur metabolism; hydrogen sulfide biosynthesis; sulfite from sulfate: step 1/3. Functionally, with CysD forms the ATP sulfurylase (ATPS) that catalyzes the adenylation of sulfate producing adenosine 5'-phosphosulfate (APS) and diphosphate, the first enzymatic step in sulfur assimilation pathway. APS synthesis involves the formation of a high-energy phosphoric-sulfuric acid anhydride bond driven by GTP hydrolysis by CysN coupled to ATP hydrolysis by CysD. This Cronobacter sakazakii (strain ATCC BAA-894) (Enterobacter sakazakii) protein is Sulfate adenylyltransferase subunit 1.